Consider the following 294-residue polypeptide: Survival motor neuron protein (294 aa).

Gly residues predominate over residues 1 to 12 (MAMSSGGSGGGV). Positions 1-32 (MAMSSGGSGGGVPEQEDSVLFRRGTGQSDDSD) are disordered. N-acetylalanine is present on Ala-2. 3 positions are modified to phosphoserine; by PKA: Ser-4, Ser-5, and Ser-8. A Phosphothreonine modification is found at Thr-25. Positions 26–51 (GQSDDSDIWDDTALIKAYDKAVASFK) are interacts with GEMIN2. A phosphoserine mark is found at Ser-28 and Ser-31. A Glycyl lysine isopeptide (Lys-Gly) (interchain with G-Cter in SUMO2) cross-link involves residue Lys-51. The interval 59–88 (ICETSGKPKTTPKRKPAKKNKSQKKNTAAS) is disordered. Positions 68-82 (TTPKRKPAKKNKSQK) are enriched in basic residues. Thr-69 carries the post-translational modification Phosphothreonine. Position 85 is a phosphothreonine; by PKA (Thr-85). Positions 91-151 (QWKVGDKCSA…LSPICEVANN (61 aa)) constitute a Tudor domain. Residues 97-209 (KCSAIWSEDG…MPGPRLGPGK (113 aa)) are required for interaction with RPP20/POP7. A compositionally biased stretch (low complexity) spans 156-166 (AQENENESQVS). Residues 156 to 222 (AQENENESQV…KFNGPPPPPP (67 aa)) form a disordered region. Ser-187 bears the Phosphoserine; by PKA mark. The segment covering 194–204 (LPPPPPMPGPR) has biased composition (pro residues). Residues 206–215 (GPGKPGLKFN) show a composition bias toward low complexity. Residue Lys-209 forms a Glycyl lysine isopeptide (Lys-Gly) (interchain with G-Cter in SUMO2) linkage. Residues 240 to 267 (PPIIPPPPPICPDSLDDADALGSMLISW) form a P2 (binding site for SNRPB) region. Positions 252-280 (DSLDDADALGSMLISWYMSGYHTGYYMGF) are involved in homooligomerization. Residues 279 to 294 (GFRQNQKEGRCSHSLN) are required for interaction with SYNCRIP.

Belongs to the SMN family. In terms of assembly, homooligomer; may form higher order homooligomers in the dimer to octamer range. Part of the core SMN complex that contains SMN1, GEMIN2/SIP1, DDX20/GEMIN3, GEMIN4, GEMIN5, GEMIN6, GEMIN7, GEMIN8 and STRAP/UNRIP. Part of the SMN-Sm complex that contains SMN1, GEMIN2/SIP1, DDX20/GEMIN3, GEMIN4, GEMIN5, GEMIN6, GEMIN7, GEMIN8, STRAP/UNRIP and the Sm proteins SNRPB, SNRPD1, SNRPD2, SNRPD3, SNRPE, SNRPF and SNRPG. Component of an import snRNP complex composed of KPNB1, RNUT1, SMN1 and ZNF259. Interacts with DDX20, FBL, NOLA1, RNUT1, SYNCRIP and with several spliceosomal snRNP core Sm proteins, including SNRPB, SNRPD1, SNRPD2, SNRPD3, SNRPE and ILF3. Interacts with GEMIN2; the interaction is direct. Interacts with GEMIN3; the interaction is direct. Interacts with GEMIN8; the interaction is direct. Interacts with SNRPB; the interaction is direct. Interacts (via Tudor domain) with SNRPD1 (via C-terminus); the interaction is direct. Interacts with SNRPD2; the interaction is direct. Interacts (via Tudor domain) with SNRPD3 (via C-terminus); the interaction is direct. Interacts with SNRPE; the interaction is direct. Interacts with OSTF1, LSM10, LSM11 and RPP20/POP7. Interacts (via C-terminal region) with ZPR1 (via C-terminal region). Interacts (via Tudor domain) with COIL. Interacts with SETX; recruits SETX to POLR2A. Interacts with POLR2A (via the C-terminal domain (CTD)). Interacts with PRMT5. Interacts with XRN2. Interacts (via C-terminus) with FMR1 (via C-terminus); the interaction is direct and occurs in a RNA-independent manner. Interacts (via Tudor domain) with SF3B2 ('Arg-508'-methylated form). Interacts with WRAP53/TCAB1. Interacts (via Tudor domain) with ELAVL4 in an RNA-independent manner; the interaction is required for localization of ELAVL4 to RNA granules. Interacts with FRG1. Does not homooligomerize. Does not interact with SNRPB. In terms of tissue distribution, expressed in a wide variety of tissues. Expressed at high levels in brain, kidney and liver, moderate levels in skeletal and cardiac muscle, and low levels in fibroblasts and lymphocytes. Also seen at high levels in spinal cord. Present in osteoclasts and mononuclear cells (at protein level).

Its subcellular location is the nucleus. It localises to the gem. The protein localises to the cajal body. The protein resides in the cytoplasm. It is found in the cytoplasmic granule. Its subcellular location is the perikaryon. It localises to the cell projection. The protein localises to the neuron projection. The protein resides in the axon. It is found in the myofibril. Its subcellular location is the sarcomere. It localises to the z line. Its function is as follows. The SMN complex catalyzes the assembly of small nuclear ribonucleoproteins (snRNPs), the building blocks of the spliceosome, and thereby plays an important role in the splicing of cellular pre-mRNAs. Most spliceosomal snRNPs contain a common set of Sm proteins SNRPB, SNRPD1, SNRPD2, SNRPD3, SNRPE, SNRPF and SNRPG that assemble in a heptameric protein ring on the Sm site of the small nuclear RNA to form the core snRNP (Sm core). In the cytosol, the Sm proteins SNRPD1, SNRPD2, SNRPE, SNRPF and SNRPG are trapped in an inactive 6S pICln-Sm complex by the chaperone CLNS1A that controls the assembly of the core snRNP. To assemble core snRNPs, the SMN complex accepts the trapped 5Sm proteins from CLNS1A forming an intermediate. Within the SMN complex, SMN1 acts as a structural backbone and together with GEMIN2 it gathers the Sm complex subunits. Binding of snRNA inside 5Sm ultimately triggers eviction of the SMN complex, thereby allowing binding of SNRPD3 and SNRPB to complete assembly of the core snRNP. Ensures the correct splicing of U12 intron-containing genes that may be important for normal motor and proprioceptive neurons development. Also required for resolving RNA-DNA hybrids created by RNA polymerase II, that form R-loop in transcription terminal regions, an important step in proper transcription termination. May also play a role in the metabolism of small nucleolar ribonucleoprotein (snoRNPs). The polypeptide is Survival motor neuron protein (SMN1) (Homo sapiens (Human)).